A 689-amino-acid polypeptide reads, in one-letter code: Calcium-responsive transcription factor (689 aa).

Disordered regions lie at residues M1–L46 and S541–N609. A compositionally biased stretch (basic and acidic residues) spans D13–C29. 2 stretches are compositionally biased toward polar residues: residues S541–P559 and L578–G601.

As to expression, highly expressed in brain and testis.

The protein resides in the nucleus. In terms of biological role, acts as a transcriptional activator that mediates the calcium- and neuron-selective induction of BDNF exon III transcription. Binds to the consensus calcium-response element CaRE1 5'-CTATTTCGAG-3' sequence. The chain is Calcium-responsive transcription factor (Carf) from Mus musculus (Mouse).